A 573-amino-acid polypeptide reads, in one-letter code: Threonine--tRNA ligase (573 aa).

The interval 174-474 (DHRRINKILE…LLEQTKGALD (301 aa)) is catalytic. Positions 268, 319, and 451 each coordinate Zn(2+).

Belongs to the class-II aminoacyl-tRNA synthetase family. As to quaternary structure, homodimer. Zn(2+) serves as cofactor.

The protein resides in the cytoplasm. It carries out the reaction tRNA(Thr) + L-threonine + ATP = L-threonyl-tRNA(Thr) + AMP + diphosphate + H(+). Catalyzes the attachment of threonine to tRNA(Thr) in a two-step reaction: L-threonine is first activated by ATP to form Thr-AMP and then transferred to the acceptor end of tRNA(Thr). Also edits incorrectly charged L-seryl-tRNA(Thr). This Mycoplasmoides gallisepticum (strain R(low / passage 15 / clone 2)) (Mycoplasma gallisepticum) protein is Threonine--tRNA ligase.